Reading from the N-terminus, the 385-residue chain is 8-amino-7-oxononanoate synthase (385 aa).

Arg21 contributes to the substrate binding site. 108–109 (GF) serves as a coordination point for pyridoxal 5'-phosphate. His133 lines the substrate pocket. Pyridoxal 5'-phosphate-binding residues include Ser179, His207, and Thr233. Lys236 bears the N6-(pyridoxal phosphate)lysine mark. Residue Thr352 coordinates substrate.

The protein belongs to the class-II pyridoxal-phosphate-dependent aminotransferase family. BioF subfamily. Homodimer. Pyridoxal 5'-phosphate serves as cofactor.

It carries out the reaction 6-carboxyhexanoyl-[ACP] + L-alanine + H(+) = (8S)-8-amino-7-oxononanoate + holo-[ACP] + CO2. It functions in the pathway cofactor biosynthesis; biotin biosynthesis. Functionally, catalyzes the decarboxylative condensation of pimeloyl-[acyl-carrier protein] and L-alanine to produce 8-amino-7-oxononanoate (AON), [acyl-carrier protein], and carbon dioxide. The sequence is that of 8-amino-7-oxononanoate synthase from Salmonella paratyphi A (strain ATCC 9150 / SARB42).